The chain runs to 616 residues: Proline--tRNA ligase (616 aa).

Belongs to the class-II aminoacyl-tRNA synthetase family. ProS type 1 subfamily. As to quaternary structure, homodimer.

It localises to the cytoplasm. The enzyme catalyses tRNA(Pro) + L-proline + ATP = L-prolyl-tRNA(Pro) + AMP + diphosphate. Its function is as follows. Catalyzes the attachment of proline to tRNA(Pro) in a two-step reaction: proline is first activated by ATP to form Pro-AMP and then transferred to the acceptor end of tRNA(Pro). As ProRS can inadvertently accommodate and process non-cognate amino acids such as alanine and cysteine, to avoid such errors it has two additional distinct editing activities against alanine. One activity is designated as 'pretransfer' editing and involves the tRNA(Pro)-independent hydrolysis of activated Ala-AMP. The other activity is designated 'posttransfer' editing and involves deacylation of mischarged Ala-tRNA(Pro). The misacylated Cys-tRNA(Pro) is not edited by ProRS. In Lactococcus lactis subsp. lactis (strain IL1403) (Streptococcus lactis), this protein is Proline--tRNA ligase.